A 150-amino-acid chain; its full sequence is MTAFHSLNVSASALTAQRVRMDVVSSNLANMDTTRAKQVNGEWVPYRRKMVSLQSKGESFSSILNSQMSGSGNAGNGVKVSKITEDDSDFNLVYDPTDPDANAEGYVQKPNVDPLKEMVDLVSSTRSYEANVTAMNATKGMLMKALEIGK.

Belongs to the flagella basal body rod proteins family. In terms of assembly, the basal body constitutes a major portion of the flagellar organelle and consists of four rings (L,P,S, and M) mounted on a central rod. The rod consists of about 26 subunits of FlgG in the distal portion, and FlgB, FlgC and FlgF are thought to build up the proximal portion of the rod with about 6 subunits each.

The protein resides in the bacterial flagellum basal body. The sequence is that of Flagellar basal-body rod protein FlgC (flgC) from Bacillus subtilis (strain 168).